The primary structure comprises 438 residues: GTPase Der (438 aa).

EngA-type G domains are found at residues 4–168 (PVVA…PAGA) and 176–351 (VRIA…GEYR). GTP-binding positions include 10 to 17 (GRPNVGKS), 57 to 61 (DTGGI), 120 to 123 (NKVD), 182 to 189 (GRPNVGKS), 229 to 233 (DTAGM), and 294 to 297 (NKWD). In terms of domain architecture, KH-like spans 352–436 (RQIPTSMLNR…PVRILFRRRE (85 aa)).

It belongs to the TRAFAC class TrmE-Era-EngA-EngB-Septin-like GTPase superfamily. EngA (Der) GTPase family. As to quaternary structure, associates with the 50S ribosomal subunit.

Its function is as follows. GTPase that plays an essential role in the late steps of ribosome biogenesis. This is GTPase Der from Desulforudis audaxviator (strain MP104C).